Here is a 286-residue protein sequence, read N- to C-terminus: Bifunctional protein FolD (286 aa).

Residues 168-170 (GRG), threonine 195, and valine 236 contribute to the NADP(+) site.

This sequence belongs to the tetrahydrofolate dehydrogenase/cyclohydrolase family. In terms of assembly, homodimer.

It carries out the reaction (6R)-5,10-methylene-5,6,7,8-tetrahydrofolate + NADP(+) = (6R)-5,10-methenyltetrahydrofolate + NADPH. The catalysed reaction is (6R)-5,10-methenyltetrahydrofolate + H2O = (6R)-10-formyltetrahydrofolate + H(+). It functions in the pathway one-carbon metabolism; tetrahydrofolate interconversion. Catalyzes the oxidation of 5,10-methylenetetrahydrofolate to 5,10-methenyltetrahydrofolate and then the hydrolysis of 5,10-methenyltetrahydrofolate to 10-formyltetrahydrofolate. The protein is Bifunctional protein FolD of Mycolicibacterium gilvum (strain PYR-GCK) (Mycobacterium gilvum (strain PYR-GCK)).